We begin with the raw amino-acid sequence, 294 residues long: DEP domain-containing protein 4 (294 aa).

Positions 71–162 constitute a DEP domain; sequence LQAQVEIKRR…SNISLYRFLG (92 aa).

The protein is DEP domain-containing protein 4 (DEPDC4) of Homo sapiens (Human).